A 190-amino-acid chain; its full sequence is ATP synthase subunit b 1 (190 aa).

A helical transmembrane segment spans residues 35 to 55 (DFVVLLGFLLFLAILFYFGVP).

The protein belongs to the ATPase B chain family. As to quaternary structure, F-type ATPases have 2 components, F(1) - the catalytic core - and F(0) - the membrane proton channel. F(1) has five subunits: alpha(3), beta(3), gamma(1), delta(1), epsilon(1). F(0) has three main subunits: a(1), b(2) and c(10-14). The alpha and beta chains form an alternating ring which encloses part of the gamma chain. F(1) is attached to F(0) by a central stalk formed by the gamma and epsilon chains, while a peripheral stalk is formed by the delta and b chains.

It is found in the cell inner membrane. F(1)F(0) ATP synthase produces ATP from ADP in the presence of a proton or sodium gradient. F-type ATPases consist of two structural domains, F(1) containing the extramembraneous catalytic core and F(0) containing the membrane proton channel, linked together by a central stalk and a peripheral stalk. During catalysis, ATP synthesis in the catalytic domain of F(1) is coupled via a rotary mechanism of the central stalk subunits to proton translocation. In terms of biological role, component of the F(0) channel, it forms part of the peripheral stalk, linking F(1) to F(0). This Jannaschia sp. (strain CCS1) protein is ATP synthase subunit b 1.